Here is a 144-residue protein sequence, read N- to C-terminus: Granulocyte-macrophage colony-stimulating factor (144 aa).

Residues 1 to 17 form the signal peptide; it reads MWLQNLLFLNTVVCSIS. 2 O-linked (GalNAc...) serine glycosylation sites follow: serine 22 and serine 24. The O-linked (GalNAc...) threonine glycan is linked to threonine 27. N-linked (GlcNAc...) asparagine glycosylation is found at asparagine 44, asparagine 45, and asparagine 54. Disulfide bonds link cysteine 71–cysteine 113 and cysteine 105–cysteine 138.

The protein belongs to the GM-CSF family. Monomer. The signaling GM-CSF receptor complex is a dodecamer of two head-to-head hexamers of two alpha, two beta, and two ligand subunits.

The protein localises to the secreted. In terms of biological role, cytokine that stimulates the growth and differentiation of hematopoietic precursor cells from various lineages, including granulocytes, macrophages, eosinophils and erythrocytes. In Felis catus (Cat), this protein is Granulocyte-macrophage colony-stimulating factor (CSF2).